Reading from the N-terminus, the 71-residue chain is Sec-independent protein translocase protein TatA (71 aa).

A helical transmembrane segment spans residues 1–21; it reads MGSFSIWHWLIVLVVVLLLFG. The tract at residues 47–71 is disordered; sequence AEEAKTVEHRTDEPVGEVKQKASKS. Residues 49–71 are compositionally biased toward basic and acidic residues; the sequence is EAKTVEHRTDEPVGEVKQKASKS.

It belongs to the TatA/E family. As to quaternary structure, the Tat system comprises two distinct complexes: a TatABC complex, containing multiple copies of TatA, TatB and TatC subunits, and a separate TatA complex, containing only TatA subunits. Substrates initially bind to the TatABC complex, which probably triggers association of the separate TatA complex to form the active translocon.

The protein resides in the cell inner membrane. Functionally, part of the twin-arginine translocation (Tat) system that transports large folded proteins containing a characteristic twin-arginine motif in their signal peptide across membranes. TatA could form the protein-conducting channel of the Tat system. This Chelativorans sp. (strain BNC1) protein is Sec-independent protein translocase protein TatA.